We begin with the raw amino-acid sequence, 191 residues long: Apoptosis regulator BHRF1 (191 aa).

The segment at 1 to 18 is interaction with host VRK2; sequence MAYSTREILLALCIRDSR. Asparagine 22 carries an N-linked (GlcNAc...) asparagine; by host glycan. Positions 89-109 match the BH1 motif; sequence EIFHRGDPSLGRALAWMAWCM. Residues 89 to 142 are interaction with host VRK2; it reads EIFHRGDPSLGRALAWMAWCMHACRTLCCNQSTPYYVVDLSVRGMLEASEGLDG. N-linked (GlcNAc...) asparagine; by host glycosylation is present at asparagine 118. Residues 142 to 157 carry the BH2 motif; that stretch reads GWIHQQGGWSTLIEDN. A helical membrane pass occupies residues 166-186; sequence WTLFLAGLTLSLLVICSYLFI.

This sequence belongs to the Bcl-2 family. Interacts with isoform 1 of host VRK2; this interaction is involved in protecting cells from apoptosis. Interacts with host PRA1; this interaction seems to modulate BHRF1 anti-apoptotic activity. Interacts with host BCL2L11. Interacts with host BAD and BBC3. Interacts with BALF1; BALF1 acting as a negative regulator of the survival function of BHRF1. Interacts with host BECN1.

It localises to the host membrane. Its subcellular location is the host mitochondrion. Prevents premature death of the host cell during virus production, which would otherwise reduce the amount of progeny virus. Acts as a host B-cell leukemia/lymphoma 2 (Bcl-2) homolog, and interacts with pro-apoptotic proteins to prevent mitochondria permeabilization, release of cytochrome c and subsequent apoptosis of the host cell. In addition, plays a role in the inhibiton of host BECN1-mediated starvation-induced autophagy without affecting basal levels of autophagy. The chain is Apoptosis regulator BHRF1 from Epstein-Barr virus (strain GD1) (HHV-4).